A 523-amino-acid polypeptide reads, in one-letter code: Calcium-dependent protein kinase 34 (523 aa).

Residues 1–60 form a disordered region; it reads MGNCCSHGRDSDDNKEEPRPENGGGGVGAAEASVRASKHPPASPPPATKQGPIGPVLGRP. A lipid anchor (N-myristoyl glycine) is attached at Gly-2. The span at 7-20 shows a compositional bias: basic and acidic residues; sequence HGRDSDDNKEEPRP. Residues 68-326 enclose the Protein kinase domain; the sequence is YTLGKELGRG…AAQVLNHPWI (259 aa). ATP contacts are provided by residues 74–82 and Lys-97; that span reads LGRGQFGVT. The active-site Proton acceptor is the Asp-192. Residue Ser-232 is modified to Phosphoserine. The segment at 332–362 is autoinhibitory domain; the sequence is APDVPLDNAVMSRLKQFKAMNNFKKVALRVI. 4 consecutive EF-hand domains span residues 369-404, 405-440, 441-476, and 480-511; these read EEIMGLKEMFKGMDTDNSGTITLEELRQGLAKQGTR, LSEYEVQQLMEAADADGNGTIDYGEFIAATMHINRL, DREEHLYSAFQHFDKDNSGYITTEELEQALREFGMN, and DIKEIISEVDGDNDGRINYEEFVAMMRKGNPD. 20 residues coordinate Ca(2+): Asp-382, Asp-384, Ser-386, Thr-388, Glu-393, Asp-418, Asp-420, Asn-422, Thr-424, Glu-429, Asp-454, Asp-456, Ser-458, Tyr-460, Glu-465, Asp-489, Asp-491, Asp-493, Arg-495, and Glu-500.

The protein belongs to the protein kinase superfamily. Ser/Thr protein kinase family. CDPK subfamily.

It localises to the membrane. It catalyses the reaction L-seryl-[protein] + ATP = O-phospho-L-seryl-[protein] + ADP + H(+). It carries out the reaction L-threonyl-[protein] + ATP = O-phospho-L-threonyl-[protein] + ADP + H(+). Its activity is regulated as follows. Activated by calcium. Autophosphorylation may play an important role in the regulation of the kinase activity. Its function is as follows. May play a role in signal transduction pathways that involve calcium as a second messenger. The polypeptide is Calcium-dependent protein kinase 34 (CPK34) (Arabidopsis thaliana (Mouse-ear cress)).